The following is a 133-amino-acid chain: Homeobox protein HD-5 (133 aa).

The segment at residues 34–93 is a DNA-binding region (homeobox); sequence SKRSRLKLSGQQIDVLESNFKIDSHPNSATKSLLSNALSIPLKNIQIWFQNRRAKEKTAR. The tract at residues 86–109 is disordered; the sequence is RAKEKTARDGGRRRSGNAEIEDGE.

It is found in the nucleus. This chain is Homeobox protein HD-5 (HD-5), found in Encephalitozoon cuniculi (strain GB-M1) (Microsporidian parasite).